A 117-amino-acid polypeptide reads, in one-letter code: MKALFLVTRRVVSVMLTSCESKLPTWLVSHVGVRKIIVDGLSVLLLTILLLMCIIVVAVVTLKSVVNVLKRGIEKSGNRLNEFELKDRLLRLKSPEIRNPLRRNSKREKSLGHQKDF.

This chain is 16 kDa protein, found in Tobacco rattle virus (strain PLB).